Here is a 512-residue protein sequence, read N- to C-terminus: Delta(14)-sterol reductase (512 aa).

A run of 8 helical transmembrane segments spans residues 27-47 (IGAS…GFLC), 100-120 (AVLG…LLPA), 140-160 (ACLS…VRGP), 172-192 (YIQL…YVYL), 242-262 (SFME…AFAA), 278-298 (WTPL…VIIS), 324-344 (FGFM…SIQA), and 353-373 (ALGP…YYIF). Residues Lys380, Arg384, Leu407, Trp412, and 419 to 420 (NY) contribute to the NADP(+) site. Transmembrane regions (helical) follow at residues 418–438 (INYL…LAAG) and 458–478 (MKGA…ILLI). NADP(+)-binding positions include Asp484, 488 to 492 (CRRKY), and Tyr499.

Belongs to the ERG4/ERG24 family.

The protein resides in the membrane. The enzyme catalyses 4,4-dimethyl-5alpha-cholesta-8,24-dien-3beta-ol + NADP(+) = 4,4-dimethyl-5alpha-cholesta-8,14,24-trien-3beta-ol + NADPH + H(+). Its pathway is steroid biosynthesis; zymosterol biosynthesis; zymosterol from lanosterol: step 2/6. Functionally, reduces the C14=C15 double bond of 4,4-dimethyl-cholesta-8,14,24-trienol to produce 4,4-dimethyl-cholesta-8,24-dienol. This chain is Delta(14)-sterol reductase (ERG3), found in Septoria lycopersici (Tomato leaf spot fungus).